Reading from the N-terminus, the 410-residue chain is UDP-N-acetylglucosamine--N-acetylmuramyl-(pentapeptide) pyrophosphoryl-undecaprenol N-acetylglucosamine transferase (410 aa).

A disordered region spans residues 1-34 (MKDTVSQPAGGRGATAPRPADAASPSCGSSPSAD). Low complexity predominate over residues 14-34 (ATAPRPADAASPSCGSSPSAD). UDP-N-acetyl-alpha-D-glucosamine contacts are provided by residues 45–47 (TAG), N167, R204, S238, and Q334.

The protein belongs to the glycosyltransferase 28 family. MurG subfamily.

It is found in the cell membrane. The catalysed reaction is di-trans,octa-cis-undecaprenyl diphospho-N-acetyl-alpha-D-muramoyl-L-alanyl-D-glutamyl-meso-2,6-diaminopimeloyl-D-alanyl-D-alanine + UDP-N-acetyl-alpha-D-glucosamine = di-trans,octa-cis-undecaprenyl diphospho-[N-acetyl-alpha-D-glucosaminyl-(1-&gt;4)]-N-acetyl-alpha-D-muramoyl-L-alanyl-D-glutamyl-meso-2,6-diaminopimeloyl-D-alanyl-D-alanine + UDP + H(+). The protein operates within cell wall biogenesis; peptidoglycan biosynthesis. In terms of biological role, cell wall formation. Catalyzes the transfer of a GlcNAc subunit on undecaprenyl-pyrophosphoryl-MurNAc-pentapeptide (lipid intermediate I) to form undecaprenyl-pyrophosphoryl-MurNAc-(pentapeptide)GlcNAc (lipid intermediate II). This is UDP-N-acetylglucosamine--N-acetylmuramyl-(pentapeptide) pyrophosphoryl-undecaprenol N-acetylglucosamine transferase from Mycobacterium bovis (strain ATCC BAA-935 / AF2122/97).